Here is a 494-residue protein sequence, read N- to C-terminus: Glycerol kinase (494 aa).

ADP is bound at residue threonine 13. Positions 13, 14, and 15 each coordinate ATP. Residue threonine 13 coordinates sn-glycerol 3-phosphate. Arginine 17 provides a ligand contact to ADP. The sn-glycerol 3-phosphate site is built by arginine 83, glutamate 84, tyrosine 135, and aspartate 244. 5 residues coordinate glycerol: arginine 83, glutamate 84, tyrosine 135, aspartate 244, and glutamine 245. Residues threonine 266 and glycine 309 each contribute to the ADP site. Threonine 266, glycine 309, glutamine 313, and glycine 410 together coordinate ATP. ADP-binding residues include glycine 410 and asparagine 414.

Belongs to the FGGY kinase family.

The enzyme catalyses glycerol + ATP = sn-glycerol 3-phosphate + ADP + H(+). Its pathway is polyol metabolism; glycerol degradation via glycerol kinase pathway; sn-glycerol 3-phosphate from glycerol: step 1/1. With respect to regulation, inhibited by fructose 1,6-bisphosphate (FBP). In terms of biological role, key enzyme in the regulation of glycerol uptake and metabolism. Catalyzes the phosphorylation of glycerol to yield sn-glycerol 3-phosphate. In Shewanella baltica (strain OS185), this protein is Glycerol kinase.